A 66-amino-acid chain; its full sequence is Ocellatin-PT4 (66 aa).

The N-terminal stretch at 1-22 (MAFLKKSLFLVLFLGLVSLSIC) is a signal peptide. A propeptide spanning residues 23 to 39 (DEEKRQDEDDDDDDDEE) is cleaved from the precursor. The residue at position 66 (Val66) is a Valine amide.

Expressed by the skin glands.

The protein localises to the secreted. Has antibacterial activity against Gram-negative bacteria E.coli ATCC 25922 (MIC=80 uM), K.pneumoniae ATCC 700603 (MIC=310 uM) and S.choleraesuis ATCC 14028 (MIC=310 uM). Shows no hemolytic activity and no cytotoxicity. This is Ocellatin-PT4 from Leptodactylus pustulatus (Ceara white-lipped frog).